A 334-amino-acid chain; its full sequence is Protein CapI (334 aa).

Ser-126 contributes to the substrate binding site. Tyr-151 (proton acceptor) is an active-site residue.

The protein belongs to the NAD(P)-dependent epimerase/dehydratase family.

It functions in the pathway capsule biogenesis; capsule polysaccharide biosynthesis. Functionally, required for the biosynthesis of type 1 capsular polysaccharide. The chain is Protein CapI (capI) from Staphylococcus aureus.